The primary structure comprises 413 residues: Transposon Ty4-H Gag polyprotein (413 aa).

Residues 39–115 (RKVSIKDEQV…IQLLETNENN (77 aa)) are a coiled coil. Positions 380 to 413 (RQQQLKSSAKRTKVLEQDTKKVKQSVQQQKTGNY) are disordered. A compositionally biased stretch (low complexity) spans 403 to 413 (QSVQQQKTGNY).

Capsid protein (CA) is the structural component of the virus-like particle (VLP), forming the shell that encapsulates the retrotransposons dimeric RNA genome. This chain is Transposon Ty4-H Gag polyprotein (TY4A-H), found in Saccharomyces cerevisiae (strain ATCC 204508 / S288c) (Baker's yeast).